The primary structure comprises 228 residues: Lipoprotein-releasing system ATP-binding protein LolD (228 aa).

The 223-residue stretch at 6–228 (LRCKELSKSY…KNGILHKEQG (223 aa)) folds into the ABC transporter domain. Residue 42 to 49 (GASGSGKS) coordinates ATP.

The protein belongs to the ABC transporter superfamily. Lipoprotein translocase (TC 3.A.1.125) family. The complex is composed of two ATP-binding proteins (LolD) and two transmembrane proteins (LolC and LolE).

It localises to the cell inner membrane. Its function is as follows. Part of the ABC transporter complex LolCDE involved in the translocation of mature outer membrane-directed lipoproteins, from the inner membrane to the periplasmic chaperone, LolA. Responsible for the formation of the LolA-lipoprotein complex in an ATP-dependent manner. This is Lipoprotein-releasing system ATP-binding protein LolD from Idiomarina loihiensis (strain ATCC BAA-735 / DSM 15497 / L2-TR).